The chain runs to 309 residues: Ribosomal RNA small subunit methyltransferase H (309 aa).

Residues 33 to 35 (GGH), D53, F79, D100, and Q107 each bind S-adenosyl-L-methionine.

Belongs to the methyltransferase superfamily. RsmH family.

The protein localises to the cytoplasm. It catalyses the reaction cytidine(1402) in 16S rRNA + S-adenosyl-L-methionine = N(4)-methylcytidine(1402) in 16S rRNA + S-adenosyl-L-homocysteine + H(+). Functionally, specifically methylates the N4 position of cytidine in position 1402 (C1402) of 16S rRNA. The sequence is that of Ribosomal RNA small subunit methyltransferase H from Clostridium botulinum (strain 657 / Type Ba4).